The chain runs to 299 residues: Regucalcin (299 aa).

Glutamate 18 contributes to the a divalent metal cation binding site. 3 residues coordinate substrate: arginine 101, asparagine 103, and glutamate 121. Asparagine 154 and aspartate 204 together coordinate a divalent metal cation. Catalysis depends on aspartate 204, which acts as the Proton donor/acceptor. 2 positions are modified to N6-succinyllysine: lysine 244 and lysine 253.

Belongs to the SMP-30/CGR1 family. In terms of assembly, monomer. Requires Zn(2+) as cofactor. The cofactor is Mn(2+). It depends on Ca(2+) as a cofactor. Mg(2+) is required as a cofactor.

Its subcellular location is the cytoplasm. It catalyses the reaction D-glucono-1,5-lactone + H2O = D-gluconate + H(+). Its pathway is cofactor biosynthesis; L-ascorbate biosynthesis via UDP-alpha-D-glucuronate pathway; L-ascorbate from UDP-alpha-D-glucuronate: step 3/4. In terms of biological role, gluconolactonase with low activity towards other sugar lactones, including gulonolactone and galactonolactone. Catalyzes a key step in ascorbic acid (vitamin C) biosynthesis. Can also hydrolyze diisopropyl phosphorofluoridate and phenylacetate (in vitro). Calcium-binding protein. Modulates Ca(2+) signaling, and Ca(2+)-dependent cellular processes and enzyme activities. The protein is Regucalcin (RGN) of Bos taurus (Bovine).